Consider the following 201-residue polypeptide: Fas apoptotic inhibitory molecule 1 (201 aa).

The protein belongs to the FAIM1 family.

The protein localises to the cytoplasm. Functionally, plays a role as an inducible effector molecule that mediates Fas resistance produced by surface Ig engagement in B cells. The protein is Fas apoptotic inhibitory molecule 1 (Faim) of Rattus norvegicus (Rat).